We begin with the raw amino-acid sequence, 332 residues long: Fructose-bisphosphate aldolase (332 aa).

Ser56 provides a ligand contact to D-glyceraldehyde 3-phosphate. The active-site Proton donor is the Asp93. Zn(2+) contacts are provided by His94, Asp115, Glu147, and His191. Residue Gly192 participates in dihydroxyacetone phosphate binding. His234 contributes to the Zn(2+) binding site. Residues 235-237 and 277-280 each bind dihydroxyacetone phosphate; these read GAS and NIDS.

It belongs to the class II fructose-bisphosphate aldolase family. As to quaternary structure, homodimer. Requires Zn(2+) as cofactor.

It catalyses the reaction beta-D-fructose 1,6-bisphosphate = D-glyceraldehyde 3-phosphate + dihydroxyacetone phosphate. Its pathway is carbohydrate degradation; glycolysis; D-glyceraldehyde 3-phosphate and glycerone phosphate from D-glucose: step 4/4. Its function is as follows. Catalyzes the aldol condensation of dihydroxyacetone phosphate (DHAP or glycerone-phosphate) with glyceraldehyde 3-phosphate (G3P) to form fructose 1,6-bisphosphate (FBP) in gluconeogenesis and the reverse reaction in glycolysis. The chain is Fructose-bisphosphate aldolase (fba) from Treponema pallidum (strain Nichols).